Here is a 288-residue protein sequence, read N- to C-terminus: Cell division protein DivIB (288 aa).

Over 1–25 the chain is Cytoplasmic; the sequence is MEKVIDITERVPAMKKRRRRRTNFK. A helical membrane pass occupies residues 26–46; it reads FLALVTIFLFIIIILLYFQLP. At 47–288 the chain is on the extracellular side; sequence YSDIKKIDIK…LEEQNEEEPE (242 aa). A POTRA domain is found at 48 to 116; it reads SDIKKIDIKG…NEVQITVEEW (69 aa). A compositionally biased stretch (basic and acidic residues) spans 253 to 263; that stretch reads LIKENTEKTEE. Positions 253–288 are disordered; the sequence is LIKENTEKTEEPAEETENADTEEGGQLEEQNEEEPE. The segment covering 264–288 has biased composition (acidic residues); sequence PAEETENADTEEGGQLEEQNEEEPE.

This sequence belongs to the FtsQ/DivIB family. DivIB subfamily.

The protein resides in the cell membrane. In terms of biological role, cell division protein that may be involved in stabilizing or promoting the assembly of the division complex. The sequence is that of Cell division protein DivIB from Solibacillus silvestris (strain StLB046) (Bacillus silvestris).